A 116-amino-acid polypeptide reads, in one-letter code: NADH-ubiquinone oxidoreductase chain 3 (116 aa).

Transmembrane regions (helical) follow at residues 3 to 23 (LITT…TISF), 56 to 76 (FFLI…LLPL), and 87 to 107 (LTLI…IYEW).

Belongs to the complex I subunit 3 family.

Its subcellular location is the mitochondrion membrane. It catalyses the reaction a ubiquinone + NADH + 5 H(+)(in) = a ubiquinol + NAD(+) + 4 H(+)(out). Its function is as follows. Core subunit of the mitochondrial membrane respiratory chain NADH dehydrogenase (Complex I) that is believed to belong to the minimal assembly required for catalysis. Complex I functions in the transfer of electrons from NADH to the respiratory chain. The immediate electron acceptor for the enzyme is believed to be ubiquinone. The polypeptide is NADH-ubiquinone oxidoreductase chain 3 (MT-ND3) (Oncorhynchus tshawytscha (Chinook salmon)).